A 255-amino-acid chain; its full sequence is MESFGVLSMKKLVAYITAALPDKEFTIDLALALSASGVDSLELGVPFSDPVADGPIIEHANLLALQKGFSLQDLYEITEKISPSIDTLWMGYLNPFHKVGFEQTCQKAKSLGVSGLIIPDVPFEESAPFEEQCLQNNLALIRFIAPTLGTSRIATIAPMARKFIYLVAYAGITGSGREEPLSPLIEEIRAINPEIPLYLGFGVNEHNAKEKSKEVDGVIVGSALVKVLLDERLTNTQKMTTICALAKSIKESINS.

Residues Glu-42 and Asp-53 each act as proton acceptor in the active site.

It belongs to the TrpA family. In terms of assembly, tetramer of two alpha and two beta chains.

The catalysed reaction is (1S,2R)-1-C-(indol-3-yl)glycerol 3-phosphate + L-serine = D-glyceraldehyde 3-phosphate + L-tryptophan + H2O. It participates in amino-acid biosynthesis; L-tryptophan biosynthesis; L-tryptophan from chorismate: step 5/5. The alpha subunit is responsible for the aldol cleavage of indoleglycerol phosphate to indole and glyceraldehyde 3-phosphate. This is Tryptophan synthase alpha chain from Wolinella succinogenes (strain ATCC 29543 / DSM 1740 / CCUG 13145 / JCM 31913 / LMG 7466 / NCTC 11488 / FDC 602W) (Vibrio succinogenes).